Here is a 364-residue protein sequence, read N- to C-terminus: UDP-N-acetylglucosamine--N-acetylmuramyl-(pentapeptide) pyrophosphoryl-undecaprenol N-acetylglucosamine transferase (364 aa).

Residues 19-21 (TGG), N131, R167, S195, I250, and Q295 contribute to the UDP-N-acetyl-alpha-D-glucosamine site.

The protein belongs to the glycosyltransferase 28 family. MurG subfamily.

The protein localises to the cell inner membrane. The catalysed reaction is di-trans,octa-cis-undecaprenyl diphospho-N-acetyl-alpha-D-muramoyl-L-alanyl-D-glutamyl-meso-2,6-diaminopimeloyl-D-alanyl-D-alanine + UDP-N-acetyl-alpha-D-glucosamine = di-trans,octa-cis-undecaprenyl diphospho-[N-acetyl-alpha-D-glucosaminyl-(1-&gt;4)]-N-acetyl-alpha-D-muramoyl-L-alanyl-D-glutamyl-meso-2,6-diaminopimeloyl-D-alanyl-D-alanine + UDP + H(+). Its pathway is cell wall biogenesis; peptidoglycan biosynthesis. Its function is as follows. Cell wall formation. Catalyzes the transfer of a GlcNAc subunit on undecaprenyl-pyrophosphoryl-MurNAc-pentapeptide (lipid intermediate I) to form undecaprenyl-pyrophosphoryl-MurNAc-(pentapeptide)GlcNAc (lipid intermediate II). The polypeptide is UDP-N-acetylglucosamine--N-acetylmuramyl-(pentapeptide) pyrophosphoryl-undecaprenol N-acetylglucosamine transferase (Xylella fastidiosa (strain Temecula1 / ATCC 700964)).